A 330-amino-acid polypeptide reads, in one-letter code: Autoinducer 2 import system permease protein LsrD (330 aa).

The Cytoplasmic segment spans residues 1 to 4 (MRIR). The helical transmembrane segment at 5–25 (YGWELALAALLVIEIVAFGAI) threads the bilayer. The Periplasmic segment spans residues 26–42 (NPRMLDLNMLLFSTSDF). Residues 43 to 63 (ICIGIVALPLTMVIVSGGIDI) traverse the membrane as a helical segment. Residues 64-67 (SFGS) are Cytoplasmic-facing. 2 consecutive transmembrane segments (helical) span residues 68-88 (TIGL…PMPL) and 89-109 (AILL…GLII). At 110-115 (YTKVNP) the chain is on the cytoplasmic side. The chain crosses the membrane as a helical span at residues 116–136 (LVITLGTLYLFAGSALLLSGM). Over 137–159 (AGATGYEGIGGFPMAFTDFANLD) the chain is Periplasmic. A helical membrane pass occupies residues 160–180 (VLGLPVPLIIFLICLLVFWLW). Topologically, residues 181–209 (LHKTHAGRNVFLIGQSPRVALYSAIPVNR) are cytoplasmic. A helical transmembrane segment spans residues 210–230 (TLCALYAMTGLASAVAAVLLV). Topologically, residues 231–237 (SYFGSAR) are periplasmic. Helical transmembrane passes span 238–258 (SDLG…GGAN) and 259–279 (IYGG…VGYL). Over 280-285 (QQGLQM) the chain is Periplasmic. A helical transmembrane segment spans residues 286-306 (AGVPNQVSSALSGALLIVVVV). At 307-330 (GRSVSLHRQQIKEWLARRANNPLP) the chain is on the cytoplasmic side.

This sequence belongs to the binding-protein-dependent transport system permease family. AraH/RbsC subfamily. As to quaternary structure, the complex is composed of two ATP-binding proteins (LsrA), two transmembrane proteins (LsrC and LsrD) and a solute-binding protein (LsrB).

The protein resides in the cell inner membrane. In terms of biological role, part of the ABC transporter complex LsrABCD involved in autoinducer 2 (AI-2) import. Probably responsible for the translocation of the substrate across the membrane. The sequence is that of Autoinducer 2 import system permease protein LsrD (lsrD) from Shigella flexneri serotype 5b (strain 8401).